A 212-amino-acid polypeptide reads, in one-letter code: ATP-dependent dethiobiotin synthetase BioD (212 aa).

13–18 (GIGKTV) is a binding site for ATP. Threonine 17 serves as a coordination point for Mg(2+). Lysine 33 is an active-site residue. Substrate is bound at residue serine 37. Glutamate 100 is a binding site for Mg(2+). Residues 100–103 (EGAG) and 184–186 (PRL) each bind ATP.

This sequence belongs to the dethiobiotin synthetase family. In terms of assembly, homodimer. The cofactor is Mg(2+).

Its subcellular location is the cytoplasm. It catalyses the reaction (7R,8S)-7,8-diammoniononanoate + CO2 + ATP = (4R,5S)-dethiobiotin + ADP + phosphate + 3 H(+). The protein operates within cofactor biosynthesis; biotin biosynthesis; biotin from 7,8-diaminononanoate: step 1/2. Functionally, catalyzes a mechanistically unusual reaction, the ATP-dependent insertion of CO2 between the N7 and N8 nitrogen atoms of 7,8-diaminopelargonic acid (DAPA, also called 7,8-diammoniononanoate) to form a ureido ring. The protein is ATP-dependent dethiobiotin synthetase BioD of Rhodopseudomonas palustris (strain ATCC BAA-98 / CGA009).